The primary structure comprises 762 residues: Xaa-Pro dipeptidyl-peptidase (762 aa).

Catalysis depends on charge relay system residues S349, D469, and H499.

Belongs to the peptidase S15 family. In terms of assembly, homodimer.

Its subcellular location is the cytoplasm. The catalysed reaction is Hydrolyzes Xaa-Pro-|- bonds to release unblocked, N-terminal dipeptides from substrates including Ala-Pro-|-p-nitroanilide and (sequentially) Tyr-Pro-|-Phe-Pro-|-Gly-Pro-|-Ile.. In terms of biological role, removes N-terminal dipeptides sequentially from polypeptides having unsubstituted N-termini provided that the penultimate residue is proline. The sequence is that of Xaa-Pro dipeptidyl-peptidase from Streptococcus sanguinis (strain SK36).